We begin with the raw amino-acid sequence, 306 residues long: Curved DNA-binding protein (306 aa).

Residues 5 to 69 (DYYAIMGVKP…QRRAEYDQMW (65 aa)) enclose the J domain.

The protein resides in the cytoplasm. The protein localises to the nucleoid. In terms of biological role, DNA-binding protein that preferentially recognizes a curved DNA sequence. It is probably a functional analog of DnaJ; displays overlapping activities with DnaJ, but functions under different conditions, probably acting as a molecular chaperone in an adaptive response to environmental stresses other than heat shock. Lacks autonomous chaperone activity; binds native substrates and targets them for recognition by DnaK. Its activity is inhibited by the binding of CbpM. In Escherichia coli O8 (strain IAI1), this protein is Curved DNA-binding protein.